A 60-amino-acid polypeptide reads, in one-letter code: MDAISQSPVDVLLPKHILDIWAIVLIILATVVIMTSLFLCPATAVIIYRMRTHPVLNGAV.

A helical transmembrane segment spans residues 20–40 (IWAIVLIILATVVIMTSLFLC).

The protein resides in the membrane. This Rattus norvegicus (Rat) protein is Small integral membrane protein 3 (Smim3).